A 463-amino-acid polypeptide reads, in one-letter code: Vicilin (463 aa).

The N-terminal stretch at 1–27 is a signal peptide; that stretch reads MAATTLKDSFPLLTLLGIAFLASVCLS. Residues 35 to 194 form the Cupin type-1 1 domain; the sequence is PFVFESNRFQ…SFNTDYKEIE (160 aa). Residues 235-257 are disordered; sequence LNKNAKSSSKKSTSSESEPFNLR. The span at 238-252 shows a compositional bias: low complexity; sequence NAKSSSKKSTSSESE. The region spanning 254 to 426 is the Cupin type-1 2 domain; that stretch reads FNLRSREPIY…AFPGSAQEVD (173 aa).

The protein belongs to the 7S seed storage protein family.

The protein resides in the vacuole. It localises to the aleurone grain. Functionally, seed storage protein. This is Vicilin from Vicia faba (Broad bean).